The sequence spans 902 residues: Mitochondrial aspartate-glutamate transporter AGC1 (902 aa).

3 Solcar repeats span residues 528–614 (FDSL…MRNR), 622–710 (LSLF…LKKD), and 725–813 (LKTW…FKGF). 6 consecutive transmembrane segments (helical) span residues 534-554 (FSLG…IDFI), 591-611 (GPQL…NDFM), 622-642 (LSLF…VIFT), 681-702 (GLYN…IYFP), 731-751 (LTAG…FDVI), and 786-806 (FKGG…TLAA).

The protein belongs to the mitochondrial carrier (TC 2.A.29) family.

It localises to the mitochondrion inner membrane. Calcium-dependent mitochondrial aspartate and glutamate carrier. Transport of glutamate in mitochondria is required for mitochondrial transamination reactions and ornithine synthesis. Plays also a role in malate-aspartate NADH shuttle, which is critical for growth on acetate and fatty acids. The sequence is that of Mitochondrial aspartate-glutamate transporter AGC1 (AGC1) from Saccharomyces cerevisiae (strain ATCC 204508 / S288c) (Baker's yeast).